A 74-amino-acid polypeptide reads, in one-letter code: Omega-conotoxin-like protein 1 (74 aa).

A signal peptide spans 1-20 (MSKFILLVCILLLTTNIVSA). Intrachain disulfides connect cysteine 24-cysteine 38, cysteine 31-cysteine 43, and cysteine 37-cysteine 50.

As to expression, highly expressed in brain. Is also found in hemolymph.

Its function is as follows. The impact of this protein on the neuronal activity of the honeybee brain is not known. It does not affect apparent movement or hatching of blowfly larvae. However, when injected into fish, it induces a strong reversible paralytic effect. In addition, the presence of this small peptide in the hemolymph of adult drones together with its induction after bacterial infection suggests that this peptide exhibits antibacterial activity. This peptide may act by inhibiting ion channels. The sequence is that of Omega-conotoxin-like protein 1 from Apis mellifera (Honeybee).